The following is a 139-amino-acid chain: UDP-glucose 4-epimerase (139 aa).

NAD(+)-binding positions include 11-12 (YI), 31-36 (DNLCNS), 58-59 (DI), 80-84 (FAGLK), N99, and S124. Position 124 (S124) interacts with substrate. Y136 functions as the Proton acceptor in the catalytic mechanism.

It belongs to the NAD(P)-dependent epimerase/dehydratase family. Homodimer. NAD(+) is required as a cofactor.

The enzyme catalyses UDP-alpha-D-glucose = UDP-alpha-D-galactose. Its pathway is carbohydrate metabolism; galactose metabolism. Involved in the metabolism of galactose. Catalyzes the conversion of UDP-galactose (UDP-Gal) to UDP-glucose (UDP-Glc) through a mechanism involving the transient reduction of NAD. The chain is UDP-glucose 4-epimerase (galE) from Klebsiella pneumoniae.